A 448-amino-acid chain; its full sequence is Allantoinase (448 aa).

Histidine 60, histidine 62, lysine 147, histidine 183, histidine 239, and aspartate 312 together coordinate Zn(2+). N6-carboxylysine is present on lysine 147.

Belongs to the metallo-dependent hydrolases superfamily. Allantoinase family. In terms of assembly, homotetramer. Zn(2+) serves as cofactor. In terms of processing, carboxylation allows a single lysine to coordinate two zinc ions.

It carries out the reaction (S)-allantoin + H2O = allantoate + H(+). It participates in nitrogen metabolism; (S)-allantoin degradation; allantoate from (S)-allantoin: step 1/1. Catalyzes the conversion of allantoin (5-ureidohydantoin) to allantoic acid by hydrolytic cleavage of the five-member hydantoin ring. The chain is Allantoinase from Deinococcus radiodurans (strain ATCC 13939 / DSM 20539 / JCM 16871 / CCUG 27074 / LMG 4051 / NBRC 15346 / NCIMB 9279 / VKM B-1422 / R1).